The chain runs to 344 residues: Arginine N-succinyltransferase (344 aa).

Leucine 125 provides a ligand contact to succinyl-CoA. Histidine 229 functions as the Proton donor in the catalytic mechanism.

Belongs to the arginine N-succinyltransferase family.

It catalyses the reaction succinyl-CoA + L-arginine = N(2)-succinyl-L-arginine + CoA + H(+). Its pathway is amino-acid degradation; L-arginine degradation via AST pathway; L-glutamate and succinate from L-arginine: step 1/5. In terms of biological role, catalyzes the transfer of succinyl-CoA to arginine to produce N(2)-succinylarginine. The polypeptide is Arginine N-succinyltransferase (Enterobacter sp. (strain 638)).